The sequence spans 201 residues: Orotate phosphoribosyltransferase (201 aa).

113-121 (EDIITTGKS) contacts 5-phospho-alpha-D-ribose 1-diphosphate. Orotate contacts are provided by Thr-117 and Arg-145.

It belongs to the purine/pyrimidine phosphoribosyltransferase family. PyrE subfamily. Homodimer. Requires Mg(2+) as cofactor.

The enzyme catalyses orotidine 5'-phosphate + diphosphate = orotate + 5-phospho-alpha-D-ribose 1-diphosphate. The protein operates within pyrimidine metabolism; UMP biosynthesis via de novo pathway; UMP from orotate: step 1/2. Catalyzes the transfer of a ribosyl phosphate group from 5-phosphoribose 1-diphosphate to orotate, leading to the formation of orotidine monophosphate (OMP). The sequence is that of Orotate phosphoribosyltransferase from Helicobacter acinonychis (strain Sheeba).